The chain runs to 55 residues: MKRQKRDRLERAHQRGYQAGIAGRSKEMCPYQTLNQRSQWLGGWREAMADRVVMA.

This sequence belongs to the ribosome modulation factor family. As to quaternary structure, associates exclusively with 100S ribosomes.

The protein resides in the cytoplasm. Functionally, during stationary phase, converts 70S ribosomes to an inactive dimeric form (100S ribosomes). May form immature 90S particles, which are converted to mature 100S ribosomes by the hibernation promoting factor Hpf. The protein is Ribosome modulation factor of Escherichia coli O157:H7.